The primary structure comprises 427 residues: 3-phosphoshikimate 1-carboxyvinyltransferase (427 aa).

3-phosphoshikimate-binding residues include Lys-22, Ser-23, and Arg-27. Position 22 (Lys-22) interacts with phosphoenolpyruvate. Phosphoenolpyruvate-binding residues include Gly-96 and Arg-124. The 3-phosphoshikimate site is built by Ser-169, Ser-170, Gln-171, Ser-197, Asp-313, Asn-336, and Lys-340. Gln-171 serves as a coordination point for phosphoenolpyruvate. The active-site Proton acceptor is the Asp-313. Positions 344, 386, and 411 each coordinate phosphoenolpyruvate.

This sequence belongs to the EPSP synthase family. Monomer.

It localises to the cytoplasm. It carries out the reaction 3-phosphoshikimate + phosphoenolpyruvate = 5-O-(1-carboxyvinyl)-3-phosphoshikimate + phosphate. It participates in metabolic intermediate biosynthesis; chorismate biosynthesis; chorismate from D-erythrose 4-phosphate and phosphoenolpyruvate: step 6/7. Functionally, catalyzes the transfer of the enolpyruvyl moiety of phosphoenolpyruvate (PEP) to the 5-hydroxyl of shikimate-3-phosphate (S3P) to produce enolpyruvyl shikimate-3-phosphate and inorganic phosphate. The chain is 3-phosphoshikimate 1-carboxyvinyltransferase from Salmonella agona (strain SL483).